A 900-amino-acid chain; its full sequence is Zinc finger protein 574 (900 aa).

3 consecutive C2H2-type zinc fingers follow at residues 16 to 38, 76 to 98, and 126 to 148; these read YVCS…QNSH, YQCL…QELH, and YECV…RQTH. Ser-164 carries the post-translational modification Phosphoserine. The C2H2-type 4 zinc-finger motif lies at 213 to 235; the sequence is YKCSECSQLFQMPADFLEHQATH. Residues 244-254 are compositionally biased toward low complexity; the sequence is AEPATQQETQV. The interval 244–306 is disordered; sequence AEPATQQETQ…RRNNSGESGG (63 aa). The segment covering 273–290 has biased composition (basic and acidic residues); that stretch reads HSYELRNELRNGEAIGRD. Phosphoserine is present on Ser-301. 10 C2H2-type zinc fingers span residues 312–334, 339–361, 367–389, 395–416, 469–492, 498–520, 526–548, 554–576, 582–604, and 610–633; these read LFCS…LRSH, FKCP…LGDH, FLCV…RRAH, HSCP…RRTH, YRCL…RFVH, HKCS…LRTH, FPCP…RLTH, YRCG…RLVH, YRCQ…RYHH, and YKCR…LVIH. The C2H2-type 15; degenerate zinc finger occupies 639–662; it reads YRCSSCGAAFPSSLRLREHRCAAA. A C2H2-type 16 zinc finger spans residues 670-692; sequence FECGTCGKKVGSAARLQAHEAAH. Positions 690–741 are disordered; it reads AAHAAAGPGEVLAKEPPAPRASRATRTPVAPSPTALSGTTSAAPAAPARRRG. Ser-721 bears the Phosphoserine mark. Positions 721–736 are enriched in low complexity; it reads SPTALSGTTSAAPAAP. Residue Thr-728 is modified to Phosphothreonine. C2H2-type zinc fingers lie at residues 742-764, 770-792, 798-820, and 826-848; these read PECS…RRIH, YPCP…RRLH, FACE…RRIH, and YSCP…RKTH. Arg-836 bears the Asymmetric dimethylarginine mark.

It belongs to the krueppel C2H2-type zinc-finger protein family.

It localises to the nucleus. May be involved in transcriptional regulation. In Mus musculus (Mouse), this protein is Zinc finger protein 574 (Znf574).